We begin with the raw amino-acid sequence, 614 residues long: Chaperone protein DnaK (614 aa).

Residue T173 is modified to Phosphothreonine; by autocatalysis. Basic and acidic residues-rich tracts occupy residues 490–509 (EENAEADKKRREESDLRNEA) and 529–542 (EEDKQNAEDKKEAL). 3 disordered regions span residues 490–510 (EENAEADKKRREESDLRNEAD), 524–555 (GENISEEDKQNAEDKKEALKSALEGEDIDDIK), and 575–614 (QAAQAQQQAQGEDANASQDSNVEDADFKEVKDDDNQDNQK). Positions 575 to 584 (QAAQAQQQAQ) are enriched in low complexity. Residues 599–614 (ADFKEVKDDDNQDNQK) are compositionally biased toward basic and acidic residues.

Belongs to the heat shock protein 70 family.

Its function is as follows. Acts as a chaperone. The chain is Chaperone protein DnaK from Staphylococcus saprophyticus subsp. saprophyticus (strain ATCC 15305 / DSM 20229 / NCIMB 8711 / NCTC 7292 / S-41).